We begin with the raw amino-acid sequence, 186 residues long: Dihydrofolate reductase (186 aa).

The region spanning 2-180 (RLNVVVAVSE…FTFKFCVYDV (179 aa)) is the DHFR domain. Residues Ala8 and 14 to 20 (GIGKGGG) contribute to the NADP(+) site. 28–33 (DMEFFK) provides a ligand contact to substrate. 51-53 (RVT) is a binding site for NADP(+). Position 67 (Arg67) interacts with substrate. Residues 73 to 75 (SST) and 112 to 119 (GGYRLYKE) each bind NADP(+).

This sequence belongs to the dihydrofolate reductase family. As to quaternary structure, monomer.

The enzyme catalyses (6S)-5,6,7,8-tetrahydrofolate + NADP(+) = 7,8-dihydrofolate + NADPH + H(+). Its pathway is cofactor biosynthesis; tetrahydrofolate biosynthesis; 5,6,7,8-tetrahydrofolate from 7,8-dihydrofolate: step 1/1. Key enzyme in folate metabolism. Contributes to the de novo mitochondrial thymidylate biosynthesis pathway. Catalyzes an essential reaction for de novo glycine and purine synthesis, and for DNA precursor synthesis. This Schistosoma mansoni (Blood fluke) protein is Dihydrofolate reductase.